Here is a 496-residue protein sequence, read N- to C-terminus: Myotilin (496 aa).

A disordered region spans residues 1-37; that stretch reads MFNYERPKHFIQPQNPCGSRLQPPGPEVSGFPSQTKQ. Omega-N-methylarginine is present on arginine 20. The segment at 78–149 is necessary for interaction with ACTN1; that stretch reads PNPGQKVTAT…PTPKTPDHEI (72 aa). Polar residues-rich tracts occupy residues 202 to 213 and 221 to 233; these read NSDVQDSPQHNP and PTSQ…SSRA. The tract at residues 202 to 239 is disordered; sequence NSDVQDSPQHNPEQARLHVPTSQVRSRSSSRAEANDQD. Residues 213–491 are necessary for interaction with FLNC; it reads PEQARLHVPT…QRLAAQSGLY (279 aa). Residues 213 to 496 form a necessary for interaction with ACTA1 region; sequence PEQARLHVPT…QSGLYESEEL (284 aa). Ig-like C2-type domains follow at residues 248-333 and 347-439; these read PRFI…ATFT and PMFI…LDVT.

This sequence belongs to the myotilin/palladin family. As to quaternary structure, homodimer. Interacts with ACTA1, ACTN1, FLNA, FLNB, FLNC, and MYOZ2. Interacts with the C-terminal region of MYOZ1. In terms of tissue distribution, expressed in skeletal muscle (at protein level).

Its subcellular location is the cell membrane. It is found in the sarcolemma. The protein resides in the cytoplasm. It localises to the cytoskeleton. The protein localises to the myofibril. Its subcellular location is the sarcomere. It is found in the z line. Component of a complex of multiple actin cross-linking proteins. Involved in the control of myofibril assembly and stability at the Z lines in muscle cells. The polypeptide is Myotilin (Myot) (Mus musculus (Mouse)).